We begin with the raw amino-acid sequence, 624 residues long: Kelch-like ECH-associated protein 1 (624 aa).

C38 carries the post-translational modification S-(2-succinyl)cysteine. Positions 77–149 (CDVTLQVKYE…AYTASISVGE (73 aa)) constitute a BTB domain. R135 participates in a covalent cross-link: N5-[4-(S-L-cysteinyl)-5-methyl-1H-imidazol-2-yl]-L-ornithine (Arg-Cys) (interchain with C-151 in KEAP1). An S-(2-succinyl)cysteine mark is found at C151 and C241. At C151 the chain carries S-(2,3-dicarboxypropyl)cysteine; alternate. C151 is modified (S-nitrosocysteine; alternate). C151 participates in a covalent cross-link: N5-[4-(S-L-cysteinyl)-5-methyl-1H-imidazol-2-yl]-L-ornithine (Cys-Arg) (interchain with R-135 in KEAP1). The BACK domain occupies 184-286 (AIGIANFAEQ…TPRFLQTQLQ (103 aa)). C257 and C273 each carry S-(2,3-dicarboxypropyl)cysteine. S-(2-succinyl)cysteine occurs at positions 288 and 319. Residue C288 is modified to S-(2,3-dicarboxypropyl)cysteine; alternate. Kelch repeat units follow at residues 327–372 (LIYT…VVGG), 373–423 (LLYA…VIDG), 424–470 (HIYA…VLNR), 471–517 (LLYA…VLHS), 519–564 (IYAA…VHQG), and 565–611 (RIYV…VTME). S-cGMP-cysteine is present on C434. C613 carries the S-(2-succinyl)cysteine modification.

The protein belongs to the KEAP1 family. As to quaternary structure, component of the BCR(KEAP1) E3 ubiquitin ligase complex, at least composed of 2 molecules of CUL3, 2 molecules of KEAP1, and RBX1. Interacts with NFE2L2/NRF2; the interaction is direct. Forms a ternary complex with NFE2L2/NRF2 and PGAM5. Interacts with (phosphorylated) SQSTM1/p62; the interaction is direct and inactivates the BCR(KEAP1) complex by sequestering it in inclusion bodies, promoting its degradation. Interacts with NFE2L1. Interacts with BPTF and PTMA. Interacts with MAP1LC3B. Interacts indirectly with ENC1. Interacts with SESN1 and SESN2. Interacts with HSP90AA1 and HSP90AB1. Interacts with PGCKA1; this interaction prevents the ubiquitination of KEAP1 by TRIM25, thus protecting KEAP1 from degradation. Non-enzymatic covalent modifications of reactive cysteines by electrophile metabolites inactivate the BCR(KEAP1) complex. Accumulation of fumarate promotes the formation of cysteine S-succination (S-(2-succinyl)cysteine), leading to inactivate the BCR(KEAP1) complex and promote NFE2L2/NRF2 nuclear accumulation and activation. Nitric oxide-dependent 8-Nitro-cGMP formation promotes cysteine guanylation (S-cGMP-cysteine), leading to NFE2L2/NRF2 nuclear accumulation and activation. Itaconate, an anti-inflammatory metabolite generated in response to lipopolysaccharide, alkylates cysteines, activating NFE2L2/NRF2. Methylglyoxal, a reactive metabolite that accumulates when the glycolytic enzyme PGK1 is inhibited, promotes formation of a methylimidazole cross-link between proximal Cys-151 and Arg-135 on another KEAP1 molecule, resulting in an inactive dimer that inactivates the BCR(KEAP1) complex. In terms of processing, degraded via a proteasomal-independent process during selective autophagy: interaction with phosphorylated SQSTM1/p62 sequesters KEAP1 in inclusion bodies, leading to its degradation. Post-translationally, auto-ubiquitinated by the BCR(KEAP1) complex. Quinone-induced oxidative stress, but not sulforaphane, increases its ubiquitination. Ubiquitination and subsequent degradation is most pronounced following prolonged exposure of cells to oxidative stress, particularly in glutathione-deficient cells that are highly susceptible to oxidative stress. Deubiquitinated by USP25; leading to stabilization. Ubiquitinated by TRIM25; leading to degradation upon ER stress.

Its subcellular location is the cytoplasm. The protein resides in the nucleus. It functions in the pathway protein modification; protein ubiquitination. With respect to regulation, ubiquitin ligase activity of the BCR(KEAP1) complex is inhibited by oxidative stress and electrophile metabolites such as sulforaphane. Electrophile metabolites react with reactive cysteine residues in KEAP1 and trigger non-enzymatic covalent modifications of these cysteine residues, leading to inactivate the ubiquitin ligase activity of the BCR(KEAP1) complex. Selective autophagy also inactivates the BCR(KEAP1) complex via interaction between KEAP1 and SQSTM1/p62, which sequesters the complex in inclusion bodies and promotes its degradation. Substrate-specific adapter of a BCR (BTB-CUL3-RBX1) E3 ubiquitin ligase complex that regulates the response to oxidative stress by targeting NFE2L2/NRF2 for ubiquitination. KEAP1 acts as a key sensor of oxidative and electrophilic stress: in normal conditions, the BCR(KEAP1) complex mediates ubiquitination and degradation of NFE2L2/NRF2, a transcription factor regulating expression of many cytoprotective genes. In response to oxidative stress, different electrophile metabolites trigger non-enzymatic covalent modifications of highly reactive cysteine residues in KEAP1, leading to inactivate the ubiquitin ligase activity of the BCR(KEAP1) complex, promoting NFE2L2/NRF2 nuclear accumulation and expression of phase II detoxifying enzymes. In response to selective autophagy, KEAP1 is sequestered in inclusion bodies following its interaction with SQSTM1/p62, leading to inactivation of the BCR(KEAP1) complex and activation of NFE2L2/NRF2. The BCR(KEAP1) complex also mediates ubiquitination of SQSTM1/p62, increasing SQSTM1/p62 sequestering activity and degradation. The BCR(KEAP1) complex also targets BPTF and PGAM5 for ubiquitination and degradation by the proteasome. This chain is Kelch-like ECH-associated protein 1, found in Rattus norvegicus (Rat).